The primary structure comprises 234 residues: uncharacterized protein (234 aa).

Disordered stretches follow at residues 1 to 65 (MTSV…RRGP) and 182 to 234 (ARGA…GRKT).

This is an uncharacterized protein from Homo sapiens (Human).